Consider the following 367-residue polypeptide: MSNQHPKKVLEMVIRALIVDDSALIRKVLSDILNQDPKIAVIGTAINGEDGLEKVRKLKPDVVLLDNIMPVLDGLKTLSHIMEEFPTPVVIVSALGEKAEEITLTALEYGAVDVIEKPSGILSQSMHEMAEEICAKVRAVSKADLNNLGCIRDLEHQIPENHRKKKNSLREKTSVRNVLAIGASTGGPRALEKLIGSFPAEIPAAVLIVQHMPPGFTASLSKRLDAKSALRVKEAQEGDIMEEGTVFIAPGDYHMEIVRNKVNGFGEDTVHLSCGPKELGSRPSVNVLFRSVARIYGPRVISLVLTGMNCDGADGAEEIKKMGGKVIAEDQSSCVIYGMPGEIVRRNLADFVLPLDKMADEIVKIVR.

The Response regulatory domain maps to 15 to 132 (RALIVDDSAL…SQSMHEMAEE (118 aa)). A 4-aspartylphosphate modification is found at Asp-66. The CheB-type methylesterase domain occupies 172-367 (KTSVRNVLAI…MADEIVKIVR (196 aa)). Residues Ser-184, His-211, and Asp-311 contribute to the active site.

Belongs to the CheB family. Post-translationally, phosphorylated by CheA. Phosphorylation of the N-terminal regulatory domain activates the methylesterase activity.

The protein resides in the cytoplasm. The enzyme catalyses [protein]-L-glutamate 5-O-methyl ester + H2O = L-glutamyl-[protein] + methanol + H(+). It catalyses the reaction L-glutaminyl-[protein] + H2O = L-glutamyl-[protein] + NH4(+). Functionally, involved in chemotaxis. Part of a chemotaxis signal transduction system that modulates chemotaxis in response to various stimuli. Catalyzes the demethylation of specific methylglutamate residues introduced into the chemoreceptors (methyl-accepting chemotaxis proteins or MCP) by CheR. Also mediates the irreversible deamidation of specific glutamine residues to glutamic acid. In Methanosarcina mazei (strain ATCC BAA-159 / DSM 3647 / Goe1 / Go1 / JCM 11833 / OCM 88) (Methanosarcina frisia), this protein is Protein-glutamate methylesterase/protein-glutamine glutaminase 2.